The chain runs to 82 residues: RNA-binding protein Hfq (82 aa).

Residues 10-70 (DAFLNQVRKD…ISTVAPLRPI (61 aa)) enclose the Sm domain.

This sequence belongs to the Hfq family. In terms of assembly, homohexamer.

In terms of biological role, RNA chaperone that binds small regulatory RNA (sRNAs) and mRNAs to facilitate mRNA translational regulation in response to envelope stress, environmental stress and changes in metabolite concentrations. Also binds with high specificity to tRNAs. In Syntrophomonas wolfei subsp. wolfei (strain DSM 2245B / Goettingen), this protein is RNA-binding protein Hfq.